The primary structure comprises 349 residues: MITFKRLSSARWGALLTSIAVLFFLAITKGADAKAGADLADIQAYRRLRTTTADAYYASEDRVFSVVKALKDLAHNAKLTFSLDKQLKVNNRFEVLRVKQVKTDVFSSSEFTDWAHYVAKICKRGRLPADRAIFKTMAAHYGDDELARMLATAKRTSRDTVVYQLKEIQQKSWKESGKSADDVYAILQLDAGGQNVLNNPGLPAWLSYVKSPSTDYIEALLLKLREQYDDVTVAKMIVSSQSGVNKRISGQLEKELSTAWRKNHITEMEVFQLLKLNDAGTTLLKNPILEIWFHYVWKMKRNDPYELLVSWFKKAGIDDAGLGKMIATAKQDDRNYWIAQTLEQRLSGK.

Positions 1–33 are cleaved as a signal peptide; that stretch reads MITFKRLSSARWGALLTSIAVLFFLAITKGADA. Positions 46–62 match the RxLR-dEER motif; that stretch reads RRLRTTTADAYYASEDR.

This sequence belongs to the RxLR effector family. Interacts directly with the potato ortholog of vascular highway 1 (VH1)-interacting kinase (VIK), encoding a predicted MEK kinase (MAP3K).

It localises to the secreted. It is found in the host cell membrane. Effector that promotes P.infestans virulence in Nicotiana benthamiana and potato. Attenuates cell death triggered by the pathogen-associated molecular pattern infestin 1 (INF1), indicating that the effector suppresses pattern-triggered immunity. However, it does not attenuate cell death triggered by a range of resistance proteins, suggesting that it specifically suppresses INF1-triggered cell death (ICD). Targets host MAP3K VIK in order to utilize or promote its ability to negatively regulate immunity. The sequence is that of RxLR effector protein CRE15 from Phytophthora infestans (strain T30-4) (Potato late blight agent).